A 166-amino-acid chain; its full sequence is Small ribosomal subunit protein uS5 (166 aa).

An S5 DRBM domain is found at 11–74 (LQEKLIAVNR…EKARRNMINV (64 aa)).

The protein belongs to the universal ribosomal protein uS5 family. As to quaternary structure, part of the 30S ribosomal subunit. Contacts proteins S4 and S8.

Its function is as follows. With S4 and S12 plays an important role in translational accuracy. Functionally, located at the back of the 30S subunit body where it stabilizes the conformation of the head with respect to the body. The sequence is that of Small ribosomal subunit protein uS5 from Haemophilus influenzae (strain 86-028NP).